Here is a 51-residue protein sequence, read N- to C-terminus: Perinerin (51 aa).

Functionally, antibacterial activity against both Gram-negative and Gram-positive bacteria. Shows marked activity against P.aeruginosa, B.megaterium, A.viridans, moderate activity against E.coli K-12, S.aureus and M.luteus, and minor activity against P.vulgaris. Antifungal activity against P.heliothis. The protein is Perinerin of Perinereis aibuhitensis (Korean lugworm).